We begin with the raw amino-acid sequence, 379 residues long: Putative acetyl-CoA C-acetyltransferase VraB (379 aa).

The Acyl-thioester intermediate role is filled by Cys86. His338 serves as the catalytic Proton acceptor.

It belongs to the thiolase-like superfamily. Thiolase family.

This is Putative acetyl-CoA C-acetyltransferase VraB (vraB) from Staphylococcus aureus (strain COL).